Here is an 80-residue protein sequence, read N- to C-terminus: Type VII secretion system accessory factor EsaB (80 aa).

Belongs to the EsaB family.

It is found in the cytoplasm. Seems to regulate secreted factors that contribute to the establishment of persistent infections in the host. In Staphylococcus aureus (strain COL), this protein is Type VII secretion system accessory factor EsaB.